Consider the following 242-residue polypeptide: Triosephosphate isomerase (242 aa).

Residue 8–10 (NWK) coordinates substrate. The active-site Electrophile is the H98. The active-site Proton acceptor is E167. Residues G173, S205, and 226–227 (GG) contribute to the substrate site.

This sequence belongs to the triosephosphate isomerase family. As to quaternary structure, homodimer.

It localises to the cytoplasm. The catalysed reaction is D-glyceraldehyde 3-phosphate = dihydroxyacetone phosphate. It participates in carbohydrate biosynthesis; gluconeogenesis. It functions in the pathway carbohydrate degradation; glycolysis; D-glyceraldehyde 3-phosphate from glycerone phosphate: step 1/1. Functionally, involved in the gluconeogenesis. Catalyzes stereospecifically the conversion of dihydroxyacetone phosphate (DHAP) to D-glyceraldehyde-3-phosphate (G3P). The sequence is that of Triosephosphate isomerase from Mesomycoplasma hyopneumoniae (strain 7448) (Mycoplasma hyopneumoniae).